Here is a 236-residue protein sequence, read N- to C-terminus: Uridylate kinase (236 aa).

Residue 9 to 12 participates in ATP binding; it reads KFSG. Positions 17 to 22 are involved in allosteric activation by GTP; that stretch reads GNSGFG. Position 51 (glycine 51) interacts with UMP. Positions 52 and 56 each coordinate ATP. Residues aspartate 72 and 133–140 contribute to the UMP site; that span reads TGNPFFTT. Threonine 160, tyrosine 166, and aspartate 169 together coordinate ATP.

This sequence belongs to the UMP kinase family. As to quaternary structure, homohexamer.

Its subcellular location is the cytoplasm. It catalyses the reaction UMP + ATP = UDP + ADP. It participates in pyrimidine metabolism; CTP biosynthesis via de novo pathway; UDP from UMP (UMPK route): step 1/1. Allosterically activated by GTP. Inhibited by UTP. In terms of biological role, catalyzes the reversible phosphorylation of UMP to UDP. This chain is Uridylate kinase, found in Helicobacter hepaticus (strain ATCC 51449 / 3B1).